Here is a 170-residue protein sequence, read N- to C-terminus: Small ribosomal subunit protein uS13 (170 aa).

The span at 128 to 140 shows a compositional bias: basic residues; the sequence is VRHKRGQKVRGQR. The disordered stretch occupies residues 128–170; the sequence is VRHKRGQKVRGQRTKSTGRTEGTIGVNVEAIKEEQAEDGGDEE.

Belongs to the universal ribosomal protein uS13 family. As to quaternary structure, part of the 30S ribosomal subunit. Forms a loose heterodimer with protein S19. Forms two bridges to the 50S subunit in the 70S ribosome.

Located at the top of the head of the 30S subunit, it contacts several helices of the 16S rRNA. In the 70S ribosome it contacts the 23S rRNA (bridge B1a) and protein L5 of the 50S subunit (bridge B1b), connecting the 2 subunits; these bridges are implicated in subunit movement. The chain is Small ribosomal subunit protein uS13 from Natronomonas pharaonis (strain ATCC 35678 / DSM 2160 / CIP 103997 / JCM 8858 / NBRC 14720 / NCIMB 2260 / Gabara) (Halobacterium pharaonis).